Consider the following 127-residue polypeptide: Glycine cleavage system H protein (127 aa).

In terms of domain architecture, Lipoyl-binding spans 22–104 (KVRIGITDFA…YEKAWMIVVE (83 aa)). Residue K63 is modified to N6-lipoyllysine.

It belongs to the GcvH family. In terms of assembly, the glycine cleavage system is composed of four proteins: P, T, L and H. The cofactor is (R)-lipoate.

In terms of biological role, the glycine cleavage system catalyzes the degradation of glycine. The H protein shuttles the methylamine group of glycine from the P protein to the T protein. Functionally, is also involved in protein lipoylation via its role as an octanoyl/lipoyl carrier protein intermediate. In Bacillus licheniformis (strain ATCC 14580 / DSM 13 / JCM 2505 / CCUG 7422 / NBRC 12200 / NCIMB 9375 / NCTC 10341 / NRRL NRS-1264 / Gibson 46), this protein is Glycine cleavage system H protein.